We begin with the raw amino-acid sequence, 669 residues long: Filensin (669 aa).

The segment at 1 to 33 is head; that stretch reads MYRRSYVFQARQERYERAQPAGPAAQPGGTAPG. S5 is modified (phosphoserine). The region spanning 33 to 318 is the IF rod domain; it reads GLAALQALGE…RIIEIEGSRL (286 aa). The tract at residues 34 to 68 is coil 1A; sequence LAALQALGERVAVQVQRARALQQRHAGLRRQLDAF. An N-acetylalanine modification is found at A35. The linker 1 stretch occupies residues 69-77; that stretch reads QRLGEQPGP. A coil 1B region spans residues 78–177; that stretch reads EDALARHVEA…RYKKNLLEIQ (100 aa). The interval 178-194 is linker 12; that stretch reads TYITVLQQIVQTAPQVS. Residues 195–318 form a coil 2 region; that stretch reads LVTGMRESGL…RIIEIEGSRL (124 aa). The interval 319–669 is tail; it reads SSVFIETPIS…GEKSLPDTRA (351 aa). S339 bears the Phosphoserine mark. 3 disordered regions span residues 380–435, 449–468, and 505–618; these read VEET…GGQI, RVSG…FTKG, and HHDG…KALS. Over residues 408–417 the composition is skewed to gly residues; the sequence is SQPGAGGGHG. G432 is lipidated: N-myristoyl glycine. S513 carries the phosphoserine modification. Residues 545-570 show a composition bias toward basic and acidic residues; sequence NGLRAKEPKDLEEKDDDGKKEAEGSR. Positions 583–593 are enriched in polar residues; the sequence is PSTSHSQTSGS. T585 bears the Phosphothreonine mark.

This sequence belongs to the intermediate filament family. As to quaternary structure, part of a complex required for lens intermediate filament formation composed of BFSP1, BFSP2 and CRYAA. Identified in a complex that contains VIM, EZR, AHNAK, BFSP1, BFSP2, ANK2, PLEC, PRX and spectrin. Found in a complex composed of PPL (via C-terminal linker domain), BFSP1 and BFSP2 in the retinal lens. Within the complex interacts with BFSP2. Interacts (via C-terminus) with MIP (via C-terminus) in aged lens fiber cells. Post-translationally, proteolytically cleaved during lens cell fiber differentiation with increased fragmentation as fiber cell age increases. Myristoylated at Gly-432 following proteolytic cleavage at Asp-431. In terms of processing, acetylated at Ala-35 following proteolytic cleavage at Leu-34. Detected in eye lens fiber cells (at protein level). Expressed in retinal lens epithelial cells (at protein level).

It is found in the cell membrane. The protein resides in the cytoplasm. It localises to the cytoskeleton. Its subcellular location is the cell cortex. Required for the correct formation of lens intermediate filaments as part of a complex composed of BFSP1, BFSP2 and CRYAA. Involved in altering the calcium regulation of MIP water permeability. This is Filensin (Bfsp1) from Mus musculus (Mouse).